We begin with the raw amino-acid sequence, 415 residues long: Light-independent protochlorophyllide reductase subunit N (415 aa).

[4Fe-4S] cluster-binding residues include Cys-16, Cys-41, and Cys-98.

The protein belongs to the BchN/ChlN family. Protochlorophyllide reductase is composed of three subunits; BchL, BchN and BchB. Forms a heterotetramer of two BchB and two BchN subunits. [4Fe-4S] cluster serves as cofactor.

The catalysed reaction is chlorophyllide a + oxidized 2[4Fe-4S]-[ferredoxin] + 2 ADP + 2 phosphate = protochlorophyllide a + reduced 2[4Fe-4S]-[ferredoxin] + 2 ATP + 2 H2O. It functions in the pathway porphyrin-containing compound metabolism; bacteriochlorophyll biosynthesis (light-independent). Component of the dark-operative protochlorophyllide reductase (DPOR) that uses Mg-ATP and reduced ferredoxin to reduce ring D of protochlorophyllide (Pchlide) to form chlorophyllide a (Chlide). This reaction is light-independent. The NB-protein (BchN-BchB) is the catalytic component of the complex. The sequence is that of Light-independent protochlorophyllide reductase subunit N from Roseiflexus sp. (strain RS-1).